We begin with the raw amino-acid sequence, 428 residues long: MATQLIDLAQQTRAAAQKLGTLSLAQRNDALAKVAQALAANQAKIVAANQADCEAAQRDGIAPALYARLKLGESKLQGAIAGIHDVINLPDPVGHLQLHRELDQDLVLKRVTCPLGVLGIIFEARPEALIQITSLAIKSGNGVILKGGKEAIQSCTVLTEIIQTALQDTAVSPQAVTLLTTREEIKTLLSLDQYVDLIIPRGSNAFVQYVQQNTTIPVLGHADGVCHLYVDVAADLSKTIPIVVDAKTQYPAACNAVETLLIHEKIAPEFLPQIAAALTAKQVTLRGDAATQKIMPVQPATAEDWRTEYSDLVLAIKIVPDVEAAIAHINTYGSKHTDGIITEDAATAQIFLNEVKAAGVYHNCSTRFADGFRYGFGAEVGISTQTLPPRGPVGLEGLVTYKYHLVGNGQIAATYSGPDAKPFTHRDL.

Belongs to the gamma-glutamyl phosphate reductase family.

The protein resides in the cytoplasm. The catalysed reaction is L-glutamate 5-semialdehyde + phosphate + NADP(+) = L-glutamyl 5-phosphate + NADPH + H(+). It functions in the pathway amino-acid biosynthesis; L-proline biosynthesis; L-glutamate 5-semialdehyde from L-glutamate: step 2/2. Functionally, catalyzes the NADPH-dependent reduction of L-glutamate 5-phosphate into L-glutamate 5-semialdehyde and phosphate. The product spontaneously undergoes cyclization to form 1-pyrroline-5-carboxylate. The protein is Gamma-glutamyl phosphate reductase of Picosynechococcus sp. (strain ATCC 27264 / PCC 7002 / PR-6) (Agmenellum quadruplicatum).